Reading from the N-terminus, the 727-residue chain is Ubiquitin carboxyl-terminal hydrolase BAP1 (727 aa).

Positions 4–235 (GWLELESDPG…IRFNLMAVVP (232 aa)) constitute a UCH catalytic domain. The Arg-finger motif motif lies at 56–60 (RRSRR). Cys-91 (nucleophile) is an active-site residue. His-169 serves as the catalytic Proton donor. Positions 273 to 351 (THKSQESQLP…SLNGVPPTPT (79 aa)) are disordered. Ser-292 carries the post-translational modification Phosphoserine. Residues 320–330 (CPQTTTHSPPS) show a composition bias toward polar residues. The HBM-like motif signature appears at 363 to 366 (NHNY). A phosphoserine mark is found at Ser-369 and Ser-394. Disordered stretches follow at residues 372-435 (QEEE…DGQL) and 462-522 (SIKT…SPVT). Positions 394-407 (SDDEEDYEDEEEDV) are enriched in acidic residues. 2 stretches are compositionally biased toward polar residues: residues 426 to 435 (SLSNSSDGQL) and 478 to 522 (THSQ…SPVT). Thr-491 bears the Phosphothreonine mark. 4 positions are modified to phosphoserine: Ser-519, Ser-535, Ser-583, and Ser-595. Residues 573 to 622 (LTEGGKGSSPSTRSSQGSQGSSSLEEKEVVEVTDSRDKSGLNRSSEPLSG) are disordered. Low complexity predominate over residues 580-595 (SSPSTRSSQGSQGSSS). The segment at 594–719 (SSLEEKEVVE…QRKPDRRKRS (126 aa)) is interaction with BRCA1. A compositionally biased stretch (basic and acidic residues) spans 596-612 (LEEKEVVEVTDSRDKSG). Positions 628–659 (KELLALLKCVEAEIANYEACLKEEVEKRKKFK) form a coiled coil. The interaction with YY1 stretch occupies residues 640-684 (EIANYEACLKEEVEKRKKFKIDDQRRTHNYDEFICTFISMLAQEG). One can recognise a ULD domain in the interval 668–696 (NYDEFICTFISMLAQEGMLANLVEQNISV). Residues 697 to 699 (RRR) are interaction with nucleosomal DNA forming a DNA clamp with ASXL1. A Classical bipartite Nuclear localization signal (NLS) motif is present at residues 697-720 (RRRQGVSIGRLHKQRKPDRRKRSR). The tract at residues 702-727 (VSIGRLHKQRKPDRRKRSRPYKAKRQ) is disordered. Residues 711–727 (RKPDRRKRSRPYKAKRQ) are positively charged C-terminal extension (CTE). The short motif at 715 to 720 (RRKRSR) is the Nuclear localization signal element. A Non-classical PY-nuclear localization signal (PY-NLS) motif is present at residues 715–722 (RRKRSRPY).

The protein belongs to the peptidase C12 family. BAP1 subfamily. As to quaternary structure, core component of the polycomb repressive deubiquitinase (PR-DUB) complex, at least composed of BAP1, one of ASXL1, ASXL2 or (probably) ASXL3, and one of MBD5 or MBD6. The PR-DUB core associates with a number of accessory proteins, including FOXK1, FOXK2, KDM1B, HCFC1, YY1 and OGT; KDM1B specifically associates with ASXL2 PR-DUB complexes. The BAP1 deubiquitinase activity is not required for PR-DUB assembly. Homodimerize (via coiled-coil hinge-region between the UCH and ULD domains) to mediate assembly of 2 copies of the BAP1-ASXL heterodimer into a bisymmetric tetramer; dimerization enhances association with nucleosomes. The PR-DUB complex associates with nucleosomes to mediate deubiquitination of 'lys-120' of histone H2AK118ub1 substrates; the association requires the positively charged C-terminal tail of BAP1. Interacts (via ULD domain) with ASXL1 (via DEUBAD domain); the interaction is direct and forms a ubiquitin binding cleft. The interaction with ASXL1 stabilizes BAP1 but is not required for nucleosome binding. Associates (via C-terminus) with nucleosome and chromatosome complexes through direct interaction with DNA and the histone3/4 dimer; this association displaces the histone-2A C-terminal tail, extending and orienting the H2AK118ub1 substrate towards the BAP1 deubiquitinase active site. Also interacts (via arginine finger) directly with the histone H2A-H2B acidic patch; this interaction is not critical for nucleosome-chromatosome association but may play a role in orienting the H2AK118ub1 substrate towards the PR-DUB complex active site. Interacts with BRCA1 (via the RING finger). Interacts (via HBM-like motif) with HCFC1. Interacts (via a C-terminal region overlapping the ULD domain) with YY1; the interaction is direct and requires the interaction with HCFC1. Interacts (when phosphorylated at Thr-491) with FOXK1. Interacts (when phosphorylated at Thr-491) with FOXK2; leading to recruitment of the PR-DUB complex and repression of FOXK2 target genes. Interacts (via non-classical PY-NLS) with TNPO1/transportin-1 (via HEAT repeats 8-12); the interaction is direct, mediates BAP1 nuclear localization and disrupts BAP1 homodimerization. Interacts (via C-terminus) with KPNA1/importin alpha5 and KPNA2/importin alpha1; these interactions can contribute to BAP1 nuclear localization but are less important than the interaction with TNPO1/transportin-1. The interaction with TNPO1/transportin-1 disrupts homodimerization and blocks ubiquitination by UBE2O. In terms of processing, ubiquitinated: monoubiquitinated at multiple sites within its nuclear localization signal (NLS) BY UBE2O, leading to cytoplasmic retention. Able to mediate autodeubiquitination via intramolecular interactions to counteract cytoplasmic retention. Monoubiquitinated on at least 4 sites near or within its PY-NLS.

The protein resides in the cytoplasm. Its subcellular location is the nucleus. It localises to the chromosome. It catalyses the reaction Thiol-dependent hydrolysis of ester, thioester, amide, peptide and isopeptide bonds formed by the C-terminal Gly of ubiquitin (a 76-residue protein attached to proteins as an intracellular targeting signal).. In terms of biological role, deubiquitinating enzyme that plays a key role in chromatin by mediating deubiquitination of histone H2A and HCFC1. Catalytic component of the polycomb repressive deubiquitinase (PR-DUB) complex, a complex that specifically mediates deubiquitination of histone H2A monoubiquitinated at 'Lys-120' (H2AK119ub1). Does not deubiquitinate monoubiquitinated histone H2B. The PR-DUB complex is an epigenetic regulator of gene expression and acts as a transcriptional coactivator, affecting genes involved in development, cell communication, signaling, cell proliferation and cell viability. Antagonizes PRC1 mediated H2AK119ub1 monoubiquitination. As part of the PR-DUB complex, associates with chromatin enriched in histone marks H3K4me1, H3K4me3, and H3K27Ac, but not in H3K27me3. Acts as a regulator of cell growth by mediating deubiquitination of HCFC1 N-terminal and C-terminal chains, with some specificity toward 'Lys-48'-linked polyubiquitin chains compared to 'Lys-63'-linked polyubiquitin chains. Deubiquitination of HCFC1 does not lead to increase stability of HCFC1. Interferes with the BRCA1 and BARD1 heterodimer activity by inhibiting their ability to mediate ubiquitination and autoubiquitination. It however does not mediate deubiquitination of BRCA1 and BARD1. Able to mediate autodeubiquitination via intramolecular interactions to counteract monoubiquitination at the nuclear localization signal (NLS), thereby protecting it from cytoplasmic sequestration. Acts as a tumor suppressor. Negatively regulates epithelial-mesenchymal transition (EMT) of trophoblast stem cells during placental development by regulating genes involved in epithelial cell integrity, cell adhesion and cytoskeletal organization. This Rattus norvegicus (Rat) protein is Ubiquitin carboxyl-terminal hydrolase BAP1 (Bap1).